The primary structure comprises 340 residues: Phenylalanine--tRNA ligase alpha subunit (340 aa).

Glutamate 255 is a Mg(2+) binding site.

It belongs to the class-II aminoacyl-tRNA synthetase family. Phe-tRNA synthetase alpha subunit type 1 subfamily. As to quaternary structure, tetramer of two alpha and two beta subunits. Mg(2+) is required as a cofactor.

Its subcellular location is the cytoplasm. The enzyme catalyses tRNA(Phe) + L-phenylalanine + ATP = L-phenylalanyl-tRNA(Phe) + AMP + diphosphate + H(+). This Desulforamulus reducens (strain ATCC BAA-1160 / DSM 100696 / MI-1) (Desulfotomaculum reducens) protein is Phenylalanine--tRNA ligase alpha subunit.